The sequence spans 760 residues: Pentatricopeptide repeat-containing protein At1g20230 (760 aa).

PPR repeat units follow at residues 49–79, 80–114, 115–149, 150–180, 181–215, 216–250, 251–285, 286–316, 317–351, 352–386, 387–421, 422–452, 453–487, 488–523, and 524–554; these read DGYI…IPDP, TIYS…GLIP, DSHV…GLDM, DAFV…MSDK, DVVT…GIEA, NIVS…GFCP, DQVT…GLLK, DKCV…FEMM, EAGV…TMEL, NVVS…GVKP, NHVT…HLLD, NVHV…MPTK, NLVC…RLKP, DFIS…GIKP, and RLEH…MPFE. The tract at residues 559–634 is type E motif; sequence VWGALLNSCR…NPGCSWIQVK (76 aa). Positions 635-665 are type E(+) motif; sequence NRVYTLLAGDKSHPQIDQITEKMDEISKEMR. A type DYW motif region spans residues 666–760; sequence KSGHRPNLDF…DGICSCGDFW (95 aa).

The protein belongs to the PPR family. PCMP-H subfamily.

This Arabidopsis thaliana (Mouse-ear cress) protein is Pentatricopeptide repeat-containing protein At1g20230 (PCMP-H21).